A 446-amino-acid chain; its full sequence is Phosphoglucosamine mutase (446 aa).

Serine 102 (phosphoserine intermediate) is an active-site residue. Residues serine 102, aspartate 241, aspartate 243, and aspartate 245 each coordinate Mg(2+). The residue at position 102 (serine 102) is a Phosphoserine.

The protein belongs to the phosphohexose mutase family. It depends on Mg(2+) as a cofactor. Post-translationally, activated by phosphorylation.

The catalysed reaction is alpha-D-glucosamine 1-phosphate = D-glucosamine 6-phosphate. Its function is as follows. Catalyzes the conversion of glucosamine-6-phosphate to glucosamine-1-phosphate. This is Phosphoglucosamine mutase from Idiomarina loihiensis (strain ATCC BAA-735 / DSM 15497 / L2-TR).